The primary structure comprises 2131 residues: Protein Ycf2 (2131 aa).

Residue 1466-1473 (GSIGTGRS) participates in ATP binding.

It belongs to the Ycf2 family.

It is found in the plastid. Its subcellular location is the chloroplast stroma. Probable ATPase of unknown function. Its presence in a non-photosynthetic plant (Epifagus virginiana) and experiments in tobacco indicate that it has an essential function which is probably not related to photosynthesis. This Helianthus annuus (Common sunflower) protein is Protein Ycf2.